A 315-amino-acid polypeptide reads, in one-letter code: Putative steroid dehydrogenase 3 (315 aa).

47-76 (ASWAVITGGTDGIGKSFSFELAKRGFNIYI) is a binding site for NADP(+). Y202 is an active-site residue.

Belongs to the short-chain dehydrogenases/reductases (SDR) family. 17-beta-HSD 3 subfamily.

The chain is Putative steroid dehydrogenase 3 (stdh-3) from Caenorhabditis elegans.